Here is a 535-residue protein sequence, read N- to C-terminus: Probable acyl-activating enzyme 22 (535 aa).

The protein belongs to the ATP-dependent AMP-binding enzyme family.

In terms of biological role, may act as an acid--thiol ligase that activates carboxylic acids by forming acyl-CoAs. The protein is Probable acyl-activating enzyme 22 (AEE22) of Arabidopsis thaliana (Mouse-ear cress).